The primary structure comprises 318 residues: NADH-ubiquinone oxidoreductase chain 1 (318 aa).

9 helical membrane-spanning segments follow: residues 2 to 22 (FLMNMLCLIIPILLAMAFLTL), 37 to 57 (PNIVGPYGLLQPIADAIKLFI), 69 to 89 (LMFTLAPMLAFSLALSMWIPM), 100 to 120 (LGVLFILALSSLAVYSILWSG), 136 to 156 (VAQTISYEVTLAIILLSTMMM), 171 to 191 (HMWLIFPLWPLAMMWFISTLA), 206 to 226 (ELVSGFNVEYAAGPFALFFMA), 253 to 273 (ELFTANFVTKTLALTMAFLWI), and 294 to 314 (LPLTLALCMLHVSLPTVSAGI).

This sequence belongs to the complex I subunit 1 family.

The protein localises to the mitochondrion inner membrane. The enzyme catalyses a ubiquinone + NADH + 5 H(+)(in) = a ubiquinol + NAD(+) + 4 H(+)(out). Functionally, core subunit of the mitochondrial membrane respiratory chain NADH dehydrogenase (Complex I) that is believed to belong to the minimal assembly required for catalysis. Complex I functions in the transfer of electrons from NADH to the respiratory chain. The immediate electron acceptor for the enzyme is believed to be ubiquinone. This Tolypeutes matacus (Southern three-banded armadillo) protein is NADH-ubiquinone oxidoreductase chain 1 (MT-ND1).